A 122-amino-acid chain; its full sequence is Large ribosomal subunit protein uL14 (122 aa).

It belongs to the universal ribosomal protein uL14 family. Part of the 50S ribosomal subunit. Forms a cluster with proteins L3 and L19. In the 70S ribosome, L14 and L19 interact and together make contacts with the 16S rRNA in bridges B5 and B8.

In terms of biological role, binds to 23S rRNA. Forms part of two intersubunit bridges in the 70S ribosome. The chain is Large ribosomal subunit protein uL14 from Herpetosiphon aurantiacus (strain ATCC 23779 / DSM 785 / 114-95).